A 148-amino-acid chain; its full sequence is Aspartate carbamoyltransferase regulatory chain (148 aa).

Residues C106, C111, C134, and C137 each contribute to the Zn(2+) site.

Belongs to the PyrI family. In terms of assembly, contains catalytic and regulatory chains. The cofactor is Zn(2+).

Involved in allosteric regulation of aspartate carbamoyltransferase. In Methanococcus maripaludis (strain C7 / ATCC BAA-1331), this protein is Aspartate carbamoyltransferase regulatory chain.